We begin with the raw amino-acid sequence, 237 residues long: KH homology domain-containing protein 1 (237 aa).

The next 2 membrane-spanning stretches (helical) occupy residues 7 to 29 (RLFR…FIYG) and 33 to 50 (LQTL…HLWI). Residues 96–155 (PMVFHMEEDQEELIFGHGDTYLRCIEVHSHTLIQLESWFTATGQTRVTVVGPHRARQWLL) enclose the KH; atypical domain.

Belongs to the KHDC1 family.

The protein resides in the membrane. The polypeptide is KH homology domain-containing protein 1 (Homo sapiens (Human)).